The sequence spans 508 residues: UDP-N-acetylmuramyl-tripeptide synthetase (508 aa).

UDP-N-acetyl-alpha-D-muramoyl-L-alanyl-D-glutamate is bound at residue Ser35. An ATP-binding site is contributed by 118-124 (GTDGKSS). Residues 163–164 (ST), Thr190, and Arg200 contribute to the UDP-N-acetyl-alpha-D-muramoyl-L-alanyl-D-glutamate site. Residue Lys232 is modified to N6-carboxylysine.

The protein belongs to the MurCDEF family. MurE subfamily. Post-translationally, carboxylation is probably crucial for Mg(2+) binding and, consequently, for the gamma-phosphate positioning of ATP.

It localises to the cytoplasm. It participates in cell wall biogenesis; peptidoglycan biosynthesis. In terms of biological role, catalyzes the addition of an amino acid to the nucleotide precursor UDP-N-acetylmuramoyl-L-alanyl-D-glutamate (UMAG) in the biosynthesis of bacterial cell-wall peptidoglycan. The protein is UDP-N-acetylmuramyl-tripeptide synthetase of Borreliella burgdorferi (strain ATCC 35210 / DSM 4680 / CIP 102532 / B31) (Borrelia burgdorferi).